Reading from the N-terminus, the 453-residue chain is F-box/FBD/LRR-repeat protein At4g00160 (453 aa).

Positions 15-68 (KDRISELPDALLIKILSFLPTKIVVATSVFSKQWRPLWKLVPNLEFDSEDYDDK) constitute an F-box domain. LRR repeat units follow at residues 89 to 111 (LESF…LWVG), 165 to 190 (MKSL…LLSG), 215 to 239 (VPSL…VINA), 247 to 270 (IEDL…IFDG), 282 to 307 (LTSV…IFYQ), and 331 to 358 (SPKL…KWNE). The 52-residue stretch at 355–406 (KWNEPKYVPECLLSHLETFVWRRFDWGREEEKEIATYILKNARRLNKATFST) folds into the FBD domain.

This chain is F-box/FBD/LRR-repeat protein At4g00160, found in Arabidopsis thaliana (Mouse-ear cress).